A 163-amino-acid chain; its full sequence is MASTYSFDIVSDFDRQELVNAVDQVIRDLKSRYDLKDTQTTVELGEEKITIGTDSEFTLESVHNILREKAAKRNLSQKIFDFGKVESASGNRVRQEITLKKGISQDIAKQISKLIRDEFKKVQASIQGDAVRVSAKAKDDLQTVIQRLKQEDYPVALQFTNYR.

The protein belongs to the YajQ family.

Functionally, nucleotide-binding protein. The protein is Nucleotide-binding protein Ava_2001 of Trichormus variabilis (strain ATCC 29413 / PCC 7937) (Anabaena variabilis).